A 662-amino-acid chain; its full sequence is Glycogen debranching enzyme (662 aa).

The active-site Nucleophile is the D338. The active-site Proton donor is the E373.

Belongs to the glycosyl hydrolase 13 family.

It catalyses the reaction Hydrolysis of (1-&gt;6)-alpha-D-glucosidic linkages to branches with degrees of polymerization of three or four glucose residues in limit dextrin.. The protein operates within glycan degradation; glycogen degradation. Functionally, removes maltotriose and maltotetraose chains that are attached by 1,6-alpha-linkage to the limit dextrin main chain, generating a debranched limit dextrin. This is Glycogen debranching enzyme from Yersinia enterocolitica serotype O:8 / biotype 1B (strain NCTC 13174 / 8081).